Consider the following 149-residue polypeptide: Ribonuclease pancreatic alpha-type (149 aa).

An N-terminal signal peptide occupies residues 1–25 (MGLEKSFILFSLLVLVLGWVQPSLG). Residues Lys32 and Arg35 each contribute to the substrate site. Catalysis depends on His37, which acts as the Proton acceptor. Intrachain disulfides connect Cys51/Cys109, Cys65/Cys120, Cys83/Cys135, and Cys90/Cys97. Substrate is bound by residues 66–70 (KPVNT), Lys91, and Arg110. His144 acts as the Proton donor in catalysis.

This sequence belongs to the pancreatic ribonuclease family. In terms of assembly, monomer.

The protein localises to the secreted. The enzyme catalyses an [RNA] containing cytidine + H2O = an [RNA]-3'-cytidine-3'-phosphate + a 5'-hydroxy-ribonucleotide-3'-[RNA].. It carries out the reaction an [RNA] containing uridine + H2O = an [RNA]-3'-uridine-3'-phosphate + a 5'-hydroxy-ribonucleotide-3'-[RNA].. Functionally, endonuclease that catalyzes the cleavage of RNA on the 3' side of pyrimidine nucleotides. Acts on single-stranded and double-stranded RNA. The sequence is that of Ribonuclease pancreatic alpha-type from Rattus fuscipes (Bush rat).